A 232-amino-acid chain; its full sequence is RNA chaperone ProQ (232 aa).

Positions 105–182 (EAKARVQAQR…REEQHTPVSD (78 aa)) are disordered. Basic and acidic residues predominate over residues 117-136 (QQAKKREAAAAAGEKEDAPR). Over residues 137–146 (RERKPRPTTP) the composition is skewed to basic residues. The span at 147-177 (RRKEGAERKPRSQKPVEKAPKTVKAPREEQH) shows a compositional bias: basic and acidic residues.

It belongs to the ProQ family.

It localises to the cytoplasm. RNA chaperone with significant RNA binding, RNA strand exchange and RNA duplexing activities. May regulate ProP activity through an RNA-based, post-transcriptional mechanism. This Escherichia coli (strain UTI89 / UPEC) protein is RNA chaperone ProQ.